A 211-amino-acid chain; its full sequence is NADH-quinone oxidoreductase subunit I (211 aa).

Residues 21 to 41 (PTTEQYPEQKKETAPRFHGRH) form a disordered region. 4Fe-4S ferredoxin-type domains are found at residues 43 to 73 (LNRH…VEGA) and 89 to 118 (RVYQ…MSND). The [4Fe-4S] cluster site is built by C53, C56, C59, C63, C98, C101, C104, and C108. The disordered stretch occupies residues 141–211 (RAGMESPPHP…AHGAGSERPR (71 aa)). The segment covering 152–166 (RLGESETDYYTRDPD) has biased composition (basic and acidic residues). Residues 179-191 (DEADEAGEAGEAG) show a composition bias toward acidic residues. The segment covering 192–211 (EAERAADKVPAHGAGSERPR) has biased composition (basic and acidic residues).

Belongs to the complex I 23 kDa subunit family. As to quaternary structure, NDH-1 is composed of 14 different subunits. Subunits NuoA, H, J, K, L, M, N constitute the membrane sector of the complex. The cofactor is [4Fe-4S] cluster.

The protein resides in the cell membrane. It carries out the reaction a quinone + NADH + 5 H(+)(in) = a quinol + NAD(+) + 4 H(+)(out). Functionally, NDH-1 shuttles electrons from NADH, via FMN and iron-sulfur (Fe-S) centers, to quinones in the respiratory chain. The immediate electron acceptor for the enzyme in this species is believed to be ubiquinone. Couples the redox reaction to proton translocation (for every two electrons transferred, four hydrogen ions are translocated across the cytoplasmic membrane), and thus conserves the redox energy in a proton gradient. In Parafrankia sp. (strain EAN1pec), this protein is NADH-quinone oxidoreductase subunit I.